The sequence spans 394 residues: Beta-ketothiolase BktB (394 aa).

The Acyl-thioester intermediate role is filled by Cys90. Active-site proton acceptor residues include His350 and Cys380.

Belongs to the thiolase-like superfamily. Thiolase family.

It catalyses the reaction an acyl-CoA + acetyl-CoA = a 3-oxoacyl-CoA + CoA. The catalysed reaction is 2 acetyl-CoA = acetoacetyl-CoA + CoA. Functionally, required for efficient production of poly(beta-hydroxybutyrate-co-beta-hydroxyvalerate) (PHBV). Catalyzes the condensation of acetyl-CoA and propionyl-CoA to form beta-ketovaleryl-CoA, and the condensation of two acetyl-CoA molecules to form acetoacetyl-CoA. This is Beta-ketothiolase BktB (bktB) from Cupriavidus necator (strain ATCC 17699 / DSM 428 / KCTC 22496 / NCIMB 10442 / H16 / Stanier 337) (Ralstonia eutropha).